A 442-amino-acid polypeptide reads, in one-letter code: 4-hydroxyphenylpyruvate dioxygenase (442 aa).

2 VOC domains span residues 45–200 (RFHH…GFEA) and 216–376 (RLDH…IFTK). Residues His219, His301, and Glu387 each contribute to the Fe cation site.

This sequence belongs to the 4HPPD family. Requires Fe cation as cofactor.

It localises to the cytoplasm. It carries out the reaction 3-(4-hydroxyphenyl)pyruvate + O2 = homogentisate + CO2. It participates in amino-acid degradation; L-phenylalanine degradation; acetoacetate and fumarate from L-phenylalanine: step 3/6. Its pathway is cofactor biosynthesis; prenylquinone biosynthesis. The polypeptide is 4-hydroxyphenylpyruvate dioxygenase (Daucus carota (Wild carrot)).